The sequence spans 870 residues: Disks large homolog 2 (870 aa).

2 S-palmitoyl cysteine lipidation sites follow: cysteine 5 and cysteine 7. Phosphoserine is present on serine 28. Tyrosine 58 carries the post-translational modification Phosphotyrosine. Serine 65 bears the Phosphoserine mark. PDZ domains are found at residues 98 to 184 and 193 to 279; these read EITL…VRRR and EIKL…VGKP. Phosphoserine occurs at positions 307, 328, 360, 365, 406, and 414. In terms of domain architecture, PDZ 3 spans 421–501; it reads KVVLHKGSTG…QTVTIIAQYQ (81 aa). At tyrosine 505 the chain carries Phosphotyrosine. A phosphoserine mark is found at serine 528, serine 530, serine 553, serine 627, and serine 635. Residues 536-606 form the SH3 domain; it reads KRSLYVRAMF…PSKRRVERKE (71 aa). The region spanning 680 to 855 is the Guanylate kinase-like domain; the sequence is TRPVIILGPM…IYNQCKLVIE (176 aa). Tyrosine 750 and tyrosine 755 each carry phosphotyrosine.

The protein belongs to the MAGUK family. In terms of assembly, interacts through its PDZ domains with NETO1. Interacts with NOS1/nNOS through second PDZ domain. Interacts with KCNJ2/Kir2.1 (via C-terminus) through one of its PDZ domains. Interacts with KCNJ4, Interacts with FRMPD4 (via C-terminus). Interacts with LRFN1, LRFN2 and LRFN4. Interacts with FASLG. Interacts with KCNJ4. Interacts with ADAM22. Interacts with DGKI (via PDZ-binding motif). Palmitoylation of isoform 1 is not required for targeting to postsynaptic density.

The protein resides in the cell membrane. It is found in the postsynaptic density. The protein localises to the synapse. It localises to the membrane. Its subcellular location is the cell projection. The protein resides in the axon. It is found in the perikaryon. In terms of biological role, required for perception of chronic pain through NMDA receptor signaling. Regulates surface expression of NMDA receptors in dorsal horn neurons of the spinal cord. Interacts with the cytoplasmic tail of NMDA receptor subunits as well as inward rectifying potassium channels. Involved in regulation of synaptic stability at cholinergic synapses. Part of the postsynaptic protein scaffold of excitatory synapses. The protein is Disks large homolog 2 (DLG2) of Homo sapiens (Human).